We begin with the raw amino-acid sequence, 373 residues long: Histidinol-phosphate aminotransferase (373 aa).

The residue at position 230 (K230) is an N6-(pyridoxal phosphate)lysine.

It belongs to the class-II pyridoxal-phosphate-dependent aminotransferase family. Histidinol-phosphate aminotransferase subfamily. As to quaternary structure, homodimer. Requires pyridoxal 5'-phosphate as cofactor.

It carries out the reaction L-histidinol phosphate + 2-oxoglutarate = 3-(imidazol-4-yl)-2-oxopropyl phosphate + L-glutamate. It participates in amino-acid biosynthesis; L-histidine biosynthesis; L-histidine from 5-phospho-alpha-D-ribose 1-diphosphate: step 7/9. The protein is Histidinol-phosphate aminotransferase of Synechococcus sp. (strain ATCC 27144 / PCC 6301 / SAUG 1402/1) (Anacystis nidulans).